The sequence spans 132 residues: Small ribosomal subunit protein uS8 (132 aa).

It belongs to the universal ribosomal protein uS8 family. In terms of assembly, part of the 30S ribosomal subunit. Contacts proteins S5 and S12.

One of the primary rRNA binding proteins, it binds directly to 16S rRNA central domain where it helps coordinate assembly of the platform of the 30S subunit. In Bacillus pumilus (strain SAFR-032), this protein is Small ribosomal subunit protein uS8.